We begin with the raw amino-acid sequence, 461 residues long: Porin AaxA (461 aa).

The N-terminal stretch at 1 to 22 (MSFRSVLLTALLSLSFTTTMQA) is a signal peptide.

Belongs to the OprB family.

It localises to the cell outer membrane. Its function is as follows. Facilitates L-arginine uptake, as part of the AaxABC system. The arginine uptake by the bacterium in the macrophage may be a virulence factor against the host innate immune response. This Chlamydia trachomatis serovar D (strain ATCC VR-885 / DSM 19411 / UW-3/Cx) protein is Porin AaxA (aaxA).